The primary structure comprises 121 residues: ATP synthase epsilon chain (121 aa).

It belongs to the ATPase epsilon chain family. As to quaternary structure, F-type ATPases have 2 components, CF(1) - the catalytic core - and CF(0) - the membrane proton channel. CF(1) has five subunits: alpha(3), beta(3), gamma(1), delta(1), epsilon(1). CF(0) has three main subunits: a, b and c.

The protein localises to the cell membrane. Produces ATP from ADP in the presence of a proton gradient across the membrane. This is ATP synthase epsilon chain from Mycobacterium sp. (strain JLS).